The sequence spans 229 residues: Allatostatin-A (229 aa).

The first 18 residues, 1-18 (MLSTSLPVCFLVIGAALC), serve as a signal peptide directing secretion. Positions 19–48 (APERMQNDPDPHDSTAQGSDNHSDHIAPLA) are excised as a propeptide. Residues 23 to 46 (MQNDPDPHDSTAQGSDNHSDHIAP) are disordered. Leu-58 bears the Leucine amide mark. The propeptide occupies 62–80 (AYSYVSEYKRLPVYNFGLG). At Leu-90 the chain carries Leucine amide. The propeptide occupies 94–130 (SVDEDQTNDDQQQIMNNDLDQAALAEFFDQYDDAGYE). Leu-140 is subject to Leucine amide. A propeptide spanning residues 144–152 (FADDDTSEE) is cleaved from the precursor. Leu-162, Leu-173, Leu-184, Leu-196, and Leu-210 each carry leucine amide. Positions 214 to 229 (SADDASTEDSDNYFDV) are excised as a propeptide.

This sequence belongs to the allatostatin family. Allatostatin-A-1: Expressed in antennal lobe (AL), corpora cardiaca (CC), corpora allata (CA) and gnathal ganglion (GNG) (at protein level). Expression in AL and GNG detected in most animals, in CC and CA in some animals (at protein level). Allatostatin-A-3: Expressed in antennal lobe (AL), corpora cardiaca (CC), corpora allata (CA) and gnathal ganglion (GNG) (at protein level). Expression in AL detected in all animals, in GNG, CC and CA in most animals (at protein level). Allatostatin-A-4: Expressed in antennal lobe (AL), corpora cardiaca (CC), corpora allata (CA) and gnathal ganglion (GNG) in all animals (at protein level). Allatostatin-A-5: Expressed in antennal lobe (AL), corpora cardiaca (CC), corpora allata (CA) and gnathal ganglion (GNG) in all animals (at protein level). Allatostatin-A-6: Expressed in antennal lobe (AL) and gnathal ganglion (GNG) (at protein level). Expression in AL detected in some animals, in GNG in few animals (at protein level). Not expressed in corpora cardiaca (CC) and corpora allata (CA) (at protein level). Allatostatin-A-7: Expressed in antennal lobe (AL), corpora cardiaca (CC), corpora allata (CA) and gnathal ganglion (GNG) (at protein level). Expression in AL detected in all animals, in GNG, CC and CA in most animals (at protein level). Allatostatin-A-8: Expressed in antennal lobe (AL), corpora cardiaca (CC), corpora allata (CA) and gnathal ganglion (GNG) (at protein level). Expression in AL detected in all animals, in GNG, CC and CA in most animals (at protein level). Allatostatin-A-9: Expressed in antennal lobe (AL), corpora cardiaca (CC), corpora allata (CA) and gnathal ganglion (GNG) (at protein level). Expression in AL detected in all animals, in GNG in most animals and in CC and CA in some animals (at protein level).

It is found in the secreted. In terms of biological role, neuropeptide inhibitors of juvenile hormone synthesis and gut muscle contraction. In Agrotis ipsilon (Black cutworm moth), this protein is Allatostatin-A.